The sequence spans 140 residues: PDZ domain-containing protein 11 (140 aa).

Positions 47-129 (IVTLKKPPGA…ISMRVRFFPY (83 aa)) constitute a PDZ domain.

As to quaternary structure, interacts with ATP2B1, ATP2B2, ATP2B3, ATP2B4 and ATP7A. Interacts with PLEKHA7 (via WW domains) at zonula adherens; this interaction is essential for the interaction between PLEKHA7 and the ADAM10-binding protein TSPAN33. Interacts with SLC5A6.

Its subcellular location is the cytoplasm. It localises to the cell junction. The protein resides in the adherens junction. It is found in the cell membrane. In terms of biological role, mediates docking of ADAM10 to zonula adherens by interacting with PLEKHA7 which is required for PLEKHA7 to interact with the ADAM10-binding protein TSPAN33. This is PDZ domain-containing protein 11 (Pdzd11) from Mus musculus (Mouse).